A 405-amino-acid polypeptide reads, in one-letter code: Adenylosuccinate synthetase (405 aa).

Residues 12–18 (GDEGKGK) and 40–42 (GHT) contribute to the GTP site. The active-site Proton acceptor is D13. 2 residues coordinate Mg(2+): D13 and G40. Residues 13-16 (DEGK), 38-41 (NAGH), T121, R135, Q213, T228, and R297 each bind IMP. H41 acts as the Proton donor in catalysis. 293 to 299 (TTTGRPR) provides a ligand contact to substrate. Residues R299, 325 to 327 (KMD), and 390 to 392 (SAG) each bind GTP.

Belongs to the adenylosuccinate synthetase family. In terms of assembly, homodimer. Mg(2+) is required as a cofactor.

The protein resides in the cytoplasm. The enzyme catalyses IMP + L-aspartate + GTP = N(6)-(1,2-dicarboxyethyl)-AMP + GDP + phosphate + 2 H(+). The protein operates within purine metabolism; AMP biosynthesis via de novo pathway; AMP from IMP: step 1/2. Plays an important role in the de novo pathway of purine nucleotide biosynthesis. Catalyzes the first committed step in the biosynthesis of AMP from IMP. This is Adenylosuccinate synthetase from Deinococcus radiodurans (strain ATCC 13939 / DSM 20539 / JCM 16871 / CCUG 27074 / LMG 4051 / NBRC 15346 / NCIMB 9279 / VKM B-1422 / R1).